We begin with the raw amino-acid sequence, 237 residues long: MSAPASTTQATGSTTSTTTKTAGATPATASGLFTIPDGDFFSTARAIVASNAVATNEDLSKIEAIWKDMKVPTDTMAQAAWDLVRHCADVGSSAQTEMIDTGPYSNGISRARLAAAIKEVCTLRQFCMKYAPVVWNWMLTNNSPPANWQAQGFKPEHKFAAFDFFNGVTNPAAIMPKEGLIRPPSEAEMNAAQTAAFVKITKARAQSNDFASLDAAVTRGRITGTTTAEAVVTLPPP.

The segment at 1-24 is disordered; sequence MSAPASTTQATGSTTSTTTKTAGA.

It belongs to the potexvirus capsid protein family.

The protein localises to the virion. Functionally, required for genome encapsidation. Forms ribonucleoprotein complexes along with TGB1 helicase and viral RNA. This chain is Coat protein, found in Brassica campestris (Field mustard).